The sequence spans 270 residues: Ribosomal RNA-processing protein 7 homolog (270 aa).

Residues T233–K268 adopt a coiled-coil conformation.

Belongs to the RRP7 family.

The chain is Ribosomal RNA-processing protein 7 homolog from Caenorhabditis elegans.